A 1016-amino-acid polypeptide reads, in one-letter code: Calmodulin-binding transcription activator 4 (1016 aa).

The segment at residues 38 to 164 (ISTLYQEAHS…YRDVSEREEG (127 aa)) is a DNA-binding region (CG-1). The disordered stretch occupies residues 324 to 343 (KNGSGPSGGTGGSGDQGSES). The segment covering 328–338 (GPSGGTGGSGD) has biased composition (gly residues). ANK repeat units follow at residues 647–676 (QEQG…NVDF), 680–709 (KGWS…SAGA), and 719–748 (NGKT…TNHL). The interval 753–786 (LEETENSKDTAQVQTEKTLNSISEQSPSGNEDQV) is disordered. The segment covering 761–785 (DTAQVQTEKTLNSISEQSPSGNEDQ) has biased composition (polar residues). IQ domains follow at residues 798–827 (AAQA…LVAC), 855–884 (YNSA…KVVK), and 878–907 (LRQK…AVRI). The tract at residues 903–925 (WAVRILDKVVLRWRRKGVGLRGF) is calmodulin-binding. Residues Ser935 and Ser962 each carry the phosphoserine modification.

This sequence belongs to the CAMTA family. Expressed in roots, stems, leaves, flowers and siliques.

The protein localises to the nucleus. Its function is as follows. Transcription activator that binds to the DNA consensus sequence 5'-[ACG]CGCG[GTC]-3'. Regulates transcriptional activity in response to calcium signals. Binds calmodulin in a calcium-dependent manner. Involved together with CAMTA2 and CAMTA3 in the positive regulation of a general stress response. The polypeptide is Calmodulin-binding transcription activator 4 (Arabidopsis thaliana (Mouse-ear cress)).